Here is a 225-residue protein sequence, read N- to C-terminus: Nuclear protein UL4 homolog (225 aa).

The protein belongs to the alphaherpesvirinae HHV-1 UL4 family.

It is found in the host nucleus. This chain is Nuclear protein UL4 homolog, found in Equus caballus (Horse).